The primary structure comprises 274 residues: Ribosomal RNA small subunit methyltransferase A (274 aa).

S-adenosyl-L-methionine-binding residues include asparagine 28, leucine 30, glycine 55, glutamate 77, aspartate 103, and asparagine 122.

It belongs to the class I-like SAM-binding methyltransferase superfamily. rRNA adenine N(6)-methyltransferase family. RsmA subfamily.

The protein localises to the cytoplasm. The catalysed reaction is adenosine(1518)/adenosine(1519) in 16S rRNA + 4 S-adenosyl-L-methionine = N(6)-dimethyladenosine(1518)/N(6)-dimethyladenosine(1519) in 16S rRNA + 4 S-adenosyl-L-homocysteine + 4 H(+). Functionally, specifically dimethylates two adjacent adenosines (A1518 and A1519) in the loop of a conserved hairpin near the 3'-end of 16S rRNA in the 30S particle. May play a critical role in biogenesis of 30S subunits. The chain is Ribosomal RNA small subunit methyltransferase A from Sinorhizobium medicae (strain WSM419) (Ensifer medicae).